The following is a 42-amino-acid chain: Large ribosomal subunit protein bL36 (42 aa).

It belongs to the bacterial ribosomal protein bL36 family.

The polypeptide is Large ribosomal subunit protein bL36 (Anaplasma marginale (strain St. Maries)).